The sequence spans 479 residues: DNA polymerase IV (479 aa).

The UmuC domain maps to 7 to 189 (ILHLDMDAFF…MTVRTLPGVG (183 aa)). 2 residues coordinate Mg(2+): Asp-11 and Asp-105. The active site involves Glu-106. Disordered stretches follow at residues 357-400 (AGDR…GHGW) and 430-479 (DPEL…TSRP). Positions 381 to 396 (AERRWPSGHDVRHTEL) are enriched in basic and acidic residues.

The protein belongs to the DNA polymerase type-Y family. Monomer. The cofactor is Mg(2+).

It is found in the cytoplasm. It carries out the reaction DNA(n) + a 2'-deoxyribonucleoside 5'-triphosphate = DNA(n+1) + diphosphate. Its function is as follows. Poorly processive, error-prone DNA polymerase involved in untargeted mutagenesis. Copies undamaged DNA at stalled replication forks, which arise in vivo from mismatched or misaligned primer ends. These misaligned primers can be extended by PolIV. Exhibits no 3'-5' exonuclease (proofreading) activity. May be involved in translesional synthesis, in conjunction with the beta clamp from PolIII. This is DNA polymerase IV from Streptomyces coelicolor (strain ATCC BAA-471 / A3(2) / M145).